The primary structure comprises 244 residues: MERSSTSFNFDKIPKFIMKLYKATNNEKYKGICWTPDGLKIHIYDRDVFVKETLPLISKTREFGTFVRMLNSYGFVKSKDIEEEDIYYNKNFRKGREDLLGFDDSLRMIKRKKSSDIRMRIGDGSLKEIVEYLYVQNQELYTELSVCKERIERQERALNGLIEILSRVFRTNSQDLGARIKPSGHNPHNEMDFFLGELSGPLKEGCEPASPPLQDKGIPELSFKPGGIPHADSDTKDDNYDPFF.

The DNA-binding element occupies 13–108 (IPKFIMKLYK…LLGFDDSLRM (96 aa)). Residues 123-168 (DGSLKEIVEYLYVQNQELYTELSVCKERIERQERALNGLIEILSRV) are involved in trimerization. Residues 204–244 (EGCEPASPPLQDKGIPELSFKPGGIPHADSDTKDDNYDPFF) are disordered. The span at 231 to 244 (ADSDTKDDNYDPFF) shows a compositional bias: basic and acidic residues.

This sequence belongs to the HSF family. Homotrimer. Homotrimerization increases the affinity of HSF1 to DNA.

It is found in the nucleus. Its function is as follows. DNA-binding transcription factor that specifically binds heat shock promoter elements (HSE) and activates transcription. This chain is Heat shock transcription factor, found in Encephalitozoon cuniculi (strain GB-M1) (Microsporidian parasite).